Reading from the N-terminus, the 119-residue chain is Ribosome-binding factor A (119 aa).

Belongs to the RbfA family. As to quaternary structure, monomer. Binds 30S ribosomal subunits, but not 50S ribosomal subunits or 70S ribosomes.

The protein localises to the cytoplasm. One of several proteins that assist in the late maturation steps of the functional core of the 30S ribosomal subunit. Associates with free 30S ribosomal subunits (but not with 30S subunits that are part of 70S ribosomes or polysomes). Required for efficient processing of 16S rRNA. May interact with the 5'-terminal helix region of 16S rRNA. This Pelodictyon phaeoclathratiforme (strain DSM 5477 / BU-1) protein is Ribosome-binding factor A.